A 238-amino-acid chain; its full sequence is Uridylate kinase (238 aa).

An ATP-binding site is contributed by lysine 12–glycine 15. Glycine 54 contacts UMP. ATP-binding residues include glycine 55 and arginine 59. UMP contacts are provided by residues aspartate 74 and threonine 135–threonine 142. The ATP site is built by threonine 162, tyrosine 168, and aspartate 171.

Belongs to the UMP kinase family. As to quaternary structure, homohexamer.

It localises to the cytoplasm. The enzyme catalyses UMP + ATP = UDP + ADP. It participates in pyrimidine metabolism; CTP biosynthesis via de novo pathway; UDP from UMP (UMPK route): step 1/1. With respect to regulation, inhibited by UTP. Its function is as follows. Catalyzes the reversible phosphorylation of UMP to UDP. In Aromatoleum aromaticum (strain DSM 19018 / LMG 30748 / EbN1) (Azoarcus sp. (strain EbN1)), this protein is Uridylate kinase.